A 1156-amino-acid polypeptide reads, in one-letter code: Pesticidal crystal protein Cry9Aa (1156 aa).

The propeptide at 1–23 (MNQNKHGIIGASNCGCASDDVAK) is removed in mature form.

Belongs to the delta endotoxin family.

Promotes colloidosmotic lysis by binding to the midgut epithelial cells of insects. This protein is toxic to Galleria mellonella. In Bacillus thuringiensis subsp. galleriae, this protein is Pesticidal crystal protein Cry9Aa (cry9Aa).